The following is a 725-amino-acid chain: Beta-adducin (725 aa).

The interval 1 to 22 (MSEDTVPEAASPPPSQGQHYFD) is disordered. S11 and S25 each carry phosphoserine. At T55 the chain carries Phosphothreonine. Phosphoserine is present on residues S60 and S344. Residues 425-444 (KQQKEKTRWLNTPNTYLRVN) form an interaction with calmodulin region. A disordered region spans residues 525 to 725 (AEKSRSPSTE…KSKKKEKVES (201 aa)). 2 positions are modified to phosphoserine: S530 and S532. At T533 the chain carries Phosphothreonine. Residue S535 is modified to Phosphoserine. Position 561 is a phosphothreonine (T561). Over residues 566–588 (EEYKKEVERKKLEQEQEGEKDAA) the composition is skewed to basic and acidic residues. A phosphoserine mark is found at S594, S598, S602, and S606. Residues 596–621 (VKSTPASPVQSPTRAGTKSPAVSPSK) are compositionally biased toward polar residues. Position 612 is a phosphothreonine (T612). Residues S614, S618, and S620 each carry the phosphoserine modification. Basic and acidic residues-rich tracts occupy residues 622-631 (ASEDAKKTEV) and 639-654 (EPEKPEGVVVNGKEEE). At T674 the chain carries Phosphothreonine. Phosphoserine occurs at positions 678, 685, 688, 692, 696, 698, 700, 702, and 712. The segment covering 687–700 (TSGPLSPEGSPSKS) has biased composition (low complexity). The span at 701 to 725 (PSKKKKKFRTPSFLKKSKKKEKVES) shows a compositional bias: basic residues. Positions 703-720 (KKKKKFRTPSFLKKSKKK) are interaction with calmodulin.

It belongs to the aldolase class II family. Adducin subfamily. As to quaternary structure, heterodimer of an alpha and a beta subunit. Found in a complex with ADD2, DMTN and SLC2A1. Interacts with SLC2A1. In terms of tissue distribution, found in liver, kidney, spleen, heart and brain.

The protein resides in the cytoplasm. It localises to the cytoskeleton. Its subcellular location is the cell membrane. In terms of biological role, membrane-cytoskeleton-associated protein that promotes the assembly of the spectrin-actin network. Binds to the erythrocyte membrane receptor SLC2A1/GLUT1 and may therefore provide a link between the spectrin cytoskeleton to the plasma membrane. Binds to calmodulin. Calmodulin binds preferentially to the beta subunit. The sequence is that of Beta-adducin (Add2) from Rattus norvegicus (Rat).